A 240-amino-acid polypeptide reads, in one-letter code: Probable septum site-determining protein MinC (240 aa).

The protein belongs to the MinC family. In terms of assembly, interacts with MinD and FtsZ.

In terms of biological role, cell division inhibitor that blocks the formation of polar Z ring septums. Rapidly oscillates between the poles of the cell to destabilize FtsZ filaments that have formed before they mature into polar Z rings. Prevents FtsZ polymerization. The polypeptide is Probable septum site-determining protein MinC (Acinetobacter baylyi (strain ATCC 33305 / BD413 / ADP1)).